The following is a 618-amino-acid chain: Medium-chain acyl-CoA ligase ACSF2, mitochondrial (618 aa).

The N-terminal 44 residues, 1–44 (MRATAAYVGMLRLGRMCAGSPGVLGARAALSRSWQEARLQAVRF), are a transit peptide targeting the mitochondrion. Lys182 carries the N6-acetyllysine modification. Position 185 is an N6-acetyllysine; alternate (Lys185). An N6-succinyllysine; alternate modification is found at Lys185. 266–274 (TSGTTGSPK) contacts ATP. Residues Lys343 and Lys401 each carry the N6-acetyllysine modification. Position 481 is an N6-succinyllysine (Lys481). 2 residues coordinate ATP: Asp496 and Arg511. At Lys513 the chain carries N6-acetyllysine. 2 positions are modified to N6-acetyllysine; alternate: Lys547 and Lys573. N6-succinyllysine; alternate occurs at positions 547 and 573. Position 602 (Lys602) interacts with ATP. Position 602 is an N6-succinyllysine (Lys602).

This sequence belongs to the ATP-dependent AMP-binding enzyme family.

It localises to the mitochondrion. It catalyses the reaction a medium-chain fatty acid + ATP + CoA = a medium-chain fatty acyl-CoA + AMP + diphosphate. The catalysed reaction is octanoate + ATP + CoA = octanoyl-CoA + AMP + diphosphate. Acyl-CoA synthases catalyze the initial reaction in fatty acid metabolism, by forming a thioester with CoA. Has some preference toward medium-chain substrates. Plays a role in adipocyte differentiation. This Macaca fascicularis (Crab-eating macaque) protein is Medium-chain acyl-CoA ligase ACSF2, mitochondrial.